We begin with the raw amino-acid sequence, 356 residues long: UDP-N-acetylglucosamine--N-acetylmuramyl-(pentapeptide) pyrophosphoryl-undecaprenol N-acetylglucosamine transferase (356 aa).

UDP-N-acetyl-alpha-D-glucosamine-binding positions include 13 to 15 (TGG), Asn125, Arg161, Ser189, Ile243, and Gln288.

It belongs to the glycosyltransferase 28 family. MurG subfamily.

Its subcellular location is the cell inner membrane. The enzyme catalyses di-trans,octa-cis-undecaprenyl diphospho-N-acetyl-alpha-D-muramoyl-L-alanyl-D-glutamyl-meso-2,6-diaminopimeloyl-D-alanyl-D-alanine + UDP-N-acetyl-alpha-D-glucosamine = di-trans,octa-cis-undecaprenyl diphospho-[N-acetyl-alpha-D-glucosaminyl-(1-&gt;4)]-N-acetyl-alpha-D-muramoyl-L-alanyl-D-glutamyl-meso-2,6-diaminopimeloyl-D-alanyl-D-alanine + UDP + H(+). It functions in the pathway cell wall biogenesis; peptidoglycan biosynthesis. Cell wall formation. Catalyzes the transfer of a GlcNAc subunit on undecaprenyl-pyrophosphoryl-MurNAc-pentapeptide (lipid intermediate I) to form undecaprenyl-pyrophosphoryl-MurNAc-(pentapeptide)GlcNAc (lipid intermediate II). The polypeptide is UDP-N-acetylglucosamine--N-acetylmuramyl-(pentapeptide) pyrophosphoryl-undecaprenol N-acetylglucosamine transferase (Cupriavidus metallidurans (strain ATCC 43123 / DSM 2839 / NBRC 102507 / CH34) (Ralstonia metallidurans)).